A 229-amino-acid chain; its full sequence is Vacuolar protein-sorting-associated protein 60 (229 aa).

Residues 9-155 are a coiled coil; it reads NKKSHDQLLQ…QGDELQEVLA (147 aa). Serine 12 is subject to Phosphoserine. The segment at 128-159 is interaction with VTA1; sequence INIDKLQDMQDEMLDLIEQGDELQEVLAMNNN. A disordered region spans residues 186–229; the sequence is PTSENSLGNDMPSYLLGANAPPAFIDEEPNLDTEDKNKALESAQ. The segment covering 218–229 has biased composition (basic and acidic residues); that stretch reads TEDKNKALESAQ.

It belongs to the SNF7 family. As to quaternary structure, interacts with VTA1; the interaction occurs at he endosomal membrane.

Its subcellular location is the endosome membrane. The protein resides in the vacuole membrane. In terms of biological role, has a role in a late stage of multivesicular body (MVB) formation. Can stimulate VPS4 ATPase activity via VTA1. This chain is Vacuolar protein-sorting-associated protein 60 (VPS60), found in Saccharomyces cerevisiae (strain ATCC 204508 / S288c) (Baker's yeast).